Here is a 561-residue protein sequence, read N- to C-terminus: Malate synthase, glyoxysomal (561 aa).

The active-site Proton acceptor is the Arg-177. Asp-462 serves as the catalytic Proton donor. Residues 559–561 (SRL) carry the Microbody targeting signal motif.

Belongs to the malate synthase family.

Its subcellular location is the glyoxysome. It catalyses the reaction glyoxylate + acetyl-CoA + H2O = (S)-malate + CoA + H(+). The protein operates within carbohydrate metabolism; glyoxylate cycle; (S)-malate from isocitrate: step 2/2. The polypeptide is Malate synthase, glyoxysomal (Brassica napus (Rape)).